Reading from the N-terminus, the 177-residue chain is Acireductone dioxygenase (177 aa).

Histidine 97, histidine 99, glutamate 103, and histidine 141 together coordinate Fe(2+). Residues histidine 97, histidine 99, glutamate 103, and histidine 141 each coordinate Ni(2+).

This sequence belongs to the acireductone dioxygenase (ARD) family. As to quaternary structure, monomer. It depends on Fe(2+) as a cofactor. The cofactor is Ni(2+).

It catalyses the reaction 1,2-dihydroxy-5-(methylsulfanyl)pent-1-en-3-one + O2 = 3-(methylsulfanyl)propanoate + CO + formate + 2 H(+). It carries out the reaction 1,2-dihydroxy-5-(methylsulfanyl)pent-1-en-3-one + O2 = 4-methylsulfanyl-2-oxobutanoate + formate + 2 H(+). It participates in amino-acid biosynthesis; L-methionine biosynthesis via salvage pathway; L-methionine from S-methyl-5-thio-alpha-D-ribose 1-phosphate: step 5/6. In terms of biological role, catalyzes 2 different reactions between oxygen and the acireductone 1,2-dihydroxy-3-keto-5-methylthiopentene (DHK-MTPene) depending upon the metal bound in the active site. Fe-containing acireductone dioxygenase (Fe-ARD) produces formate and 2-keto-4-methylthiobutyrate (KMTB), the alpha-ketoacid precursor of methionine in the methionine recycle pathway. Ni-containing acireductone dioxygenase (Ni-ARD) produces methylthiopropionate, carbon monoxide and formate, and does not lie on the methionine recycle pathway. The protein is Acireductone dioxygenase of Leptospira biflexa serovar Patoc (strain Patoc 1 / ATCC 23582 / Paris).